Here is a 231-residue protein sequence, read N- to C-terminus: Phosphatidylserine decarboxylase proenzyme (231 aa).

Ser-188 functions as the Schiff-base intermediate with substrate; via pyruvic acid in the catalytic mechanism. Ser-188 carries the pyruvic acid (Ser); by autocatalysis modification.

It belongs to the phosphatidylserine decarboxylase family. PSD-A subfamily. Heterodimer of a large membrane-associated beta subunit and a small pyruvoyl-containing alpha subunit. Pyruvate serves as cofactor. In terms of processing, is synthesized initially as an inactive proenzyme. Formation of the active enzyme involves a self-maturation process in which the active site pyruvoyl group is generated from an internal serine residue via an autocatalytic post-translational modification. Two non-identical subunits are generated from the proenzyme in this reaction, and the pyruvate is formed at the N-terminus of the alpha chain, which is derived from the carboxyl end of the proenzyme. The post-translation cleavage follows an unusual pathway, termed non-hydrolytic serinolysis, in which the side chain hydroxyl group of the serine supplies its oxygen atom to form the C-terminus of the beta chain, while the remainder of the serine residue undergoes an oxidative deamination to produce ammonia and the pyruvoyl prosthetic group on the alpha chain.

It localises to the cell membrane. The enzyme catalyses a 1,2-diacyl-sn-glycero-3-phospho-L-serine + H(+) = a 1,2-diacyl-sn-glycero-3-phosphoethanolamine + CO2. The protein operates within phospholipid metabolism; phosphatidylethanolamine biosynthesis; phosphatidylethanolamine from CDP-diacylglycerol: step 2/2. Functionally, catalyzes the formation of phosphatidylethanolamine (PtdEtn) from phosphatidylserine (PtdSer). The protein is Phosphatidylserine decarboxylase proenzyme of Rickettsia felis (strain ATCC VR-1525 / URRWXCal2) (Rickettsia azadi).